We begin with the raw amino-acid sequence, 319 residues long: Putative peptide permease protein BOV_A0351 (319 aa).

6 helical membrane-spanning segments follow: residues 9-29, 102-122, 138-158, 182-202, 242-262, and 284-304; these read LLIGLGMLLALTILIFVLLQL, LLLMAAGLAIAIVIGVTTGII, LALLGISSPAFLTALLGLYVF, LLRHLALPALVLSIGHAALIM, LPVVTLIGSTIGLAVGGAIFI, and YPVIMGATLVIGACVIIVNIL. The ABC transmembrane type-1 domain occupies 98-305; that stretch reads IGPTLLLMAA…ACVIIVNILT (208 aa).

This sequence belongs to the binding-protein-dependent transport system permease family. The complex is composed of two ATP-binding proteins (BOV_A0347 and BOV_A0348), two transmembrane proteins (BOV_A0350 and BOV_A0351) and a solute-binding protein (BOV_A0352).

Its subcellular location is the cell inner membrane. Functionally, probably part of an ABC transporter complex that could be involved in peptide import. Probably responsible for the translocation of the substrate across the membrane. The sequence is that of Putative peptide permease protein BOV_A0351 from Brucella ovis (strain ATCC 25840 / 63/290 / NCTC 10512).